The chain runs to 311 residues: HPr kinase/phosphorylase (311 aa).

Catalysis depends on residues histidine 139 and lysine 160. 154-161 (GKSGIGKS) provides a ligand contact to ATP. Serine 161 is a binding site for Mg(2+). The active-site Proton acceptor; for phosphorylation activity. Proton donor; for dephosphorylation activity is the aspartate 178. Positions 201 to 210 (MEIRGLGIIN) are important for the catalytic mechanism of both phosphorylation and dephosphorylation. Residue glutamate 202 participates in Mg(2+) binding. The active site involves arginine 245. Residues 266–271 (PISSGR) form an important for the catalytic mechanism of dephosphorylation region.

It belongs to the HPrK/P family. As to quaternary structure, homohexamer. Mg(2+) serves as cofactor.

The enzyme catalyses [HPr protein]-L-serine + ATP = [HPr protein]-O-phospho-L-serine + ADP + H(+). It catalyses the reaction [HPr protein]-O-phospho-L-serine + phosphate + H(+) = [HPr protein]-L-serine + diphosphate. Functionally, catalyzes the ATP- as well as the pyrophosphate-dependent phosphorylation of a specific serine residue in HPr, a phosphocarrier protein of the phosphoenolpyruvate-dependent sugar phosphotransferase system (PTS). HprK/P also catalyzes the pyrophosphate-producing, inorganic phosphate-dependent dephosphorylation (phosphorolysis) of seryl-phosphorylated HPr (P-Ser-HPr). This chain is HPr kinase/phosphorylase (hprK), found in Mycoplasma genitalium (strain ATCC 33530 / DSM 19775 / NCTC 10195 / G37) (Mycoplasmoides genitalium).